We begin with the raw amino-acid sequence, 1764 residues long: Nucleolar pre-ribosomal-associated protein 1 (1764 aa).

Residues 1–23 (MSNHSEAYGSRDQRREKYTQGKE) are disordered. Residues 9 to 23 (GSRDQRREKYTQGKE) are compositionally biased toward basic and acidic residues.

In terms of assembly, associates with pre-60S ribosomal particles. Predominantly associated with the 27SA2 pre-rRNA. Can associate with a subset of box H/ACA and box C/D small nucleolar RNPs (snoRNPs) required for peptidyl transferase center modification and with small RNAs snR37 and snR42. Interacts with URB2. Together with DBP6, NOP8, URB2 and RSA3, forms an RNA-independent complex, which is required during early maturation of nascent 60S ribosomal subunits.

The protein localises to the nucleus. It localises to the nucleolus. In terms of biological role, required for 60S ribosomal subunit formation and pre-rRNA processing. Required for normal accumulation of 25S and 5.8S rRNAs. This Saccharomyces cerevisiae (strain ATCC 204508 / S288c) (Baker's yeast) protein is Nucleolar pre-ribosomal-associated protein 1 (URB1).